The chain runs to 409 residues: Testis-expressed protein 13A (409 aa).

Positions 92–408 (WLHGFAKLHK…CGKGIWLQKP (317 aa)) are required for repression of transcription. Positions 347 to 374 (GGPHRIDHQEHPRDRRYSEPHQQRPPVY) are disordered. Positions 348–368 (GPHRIDHQEHPRDRRYSEPHQ) are enriched in basic and acidic residues. Residues 376–400 (RPGDWDCPWCNAVNFSRRDTCFDCG) form a RanBP2-type zinc finger. The Zn(2+) site is built by Cys-382, Cys-385, Cys-396, and Cys-399.

It belongs to the TEX13 family. Interacts with CNOT1; the interaction may inhibit CNOT1 binding to mRNA and subsequently CNOT1-mediated mRNA degradation. Testis specific.

In terms of biological role, binds to ssRNA containing the consensus sequence 5'-AGGUAA-3'. Plays a role in transcriptional repression. Required for rapid sperm motility and timely degradation of mRNA via its interaction with CNOT1. This Homo sapiens (Human) protein is Testis-expressed protein 13A.